Consider the following 513-residue polypeptide: Probable DNA primase large subunit (513 aa).

[4Fe-4S] cluster-binding residues include cysteine 315, cysteine 398, cysteine 415, and cysteine 457.

Belongs to the eukaryotic-type primase large subunit family. Heterodimer of a small subunit and a large subunit. Requires [4Fe-4S] cluster as cofactor.

Its function is as follows. DNA primase is the polymerase that synthesizes small RNA primers for the Okazaki fragments made during discontinuous DNA replication. The protein is Probable DNA primase large subunit of Neurospora crassa (strain ATCC 24698 / 74-OR23-1A / CBS 708.71 / DSM 1257 / FGSC 987).